We begin with the raw amino-acid sequence, 82 residues long: Small ribosomal subunit protein bS16 (82 aa).

Belongs to the bacterial ribosomal protein bS16 family.

The chain is Small ribosomal subunit protein bS16 from Proteus mirabilis (strain HI4320).